The following is a 1996-amino-acid chain: Protein Shroom3 (1996 aa).

Residues 25 to 110 (YIYLEAFLEG…TLRLVVRRDV (86 aa)) form the PDZ domain. Residues 150-173 (KHRRSEPAGRPHSWHTTKSGEKQP) form a disordered region. Ser-213 bears the Phosphoserine mark. Disordered regions lie at residues 340-389 (NGQG…PARS), 437-468 (EKSP…TSIY), 568-629 (DASL…WEGD), 673-772 (RRHS…LQGF), and 788-1053 (FEQR…PESS). Phosphoserine is present on residues Ser-439 and Ser-443. Basic and acidic residues predominate over residues 700–718 (KAEDPGRKAAPDLGSHLDR). Low complexity predominate over residues 750–768 (HPHTSSLGRRGPGPGSASA). The span at 814–823 (TVSTSSTSGN) shows a compositional bias: polar residues. Residue Ser-816 is modified to Phosphoserine. Composition is skewed to basic and acidic residues over residues 826–836 (EETKAHIRFSE) and 846–859 (QHFK…EEAS). 2 stretches are compositionally biased toward polar residues: residues 862-871 (PCGQQLSGGA) and 887-896 (RSQSTFQLSS). Residue Ser-890 is modified to Phosphoserine. Positions 897–909 (EPEREPEWRDRPG) are enriched in basic and acidic residues. Ser-910 and Ser-913 each carry phosphoserine. Residues 928–1030 (IKDAQSRVLG…SEPEKMNEVG (103 aa)) enclose the ASD1 domain. Residues 950-964 (APVASRSWRPRPSSA) show a composition bias toward low complexity. A Phosphoserine modification is found at Ser-970. Residues 1011–1027 (LTPEQKKRSYSEPEKMN) show a composition bias toward basic and acidic residues. A phosphoserine mark is found at Ser-1069 and Ser-1072. 4 disordered regions span residues 1093–1115 (KTGK…LRER), 1137–1223 (SSLS…MSAE), 1315–1573 (ECPG…SFNK), and 1627–1665 (SLGG…SSED). The segment covering 1137 to 1148 (SSLSSLREPSLQ) has biased composition (low complexity). Ser-1221 carries the post-translational modification Phosphoserine. Polar residues predominate over residues 1366–1375 (YCSQDGQTGR). The segment covering 1403-1417 (CEGDGPEHGVEEGTR) has biased composition (basic and acidic residues). Ser-1441 bears the Phosphoserine mark. The segment covering 1459–1472 (KQQSLPSLCSTSDP) has biased composition (polar residues). The segment covering 1498-1515 (PPPHEDYEDEVFVRDPHP) has biased composition (basic and acidic residues). Over residues 1524 to 1536 (EPLPPPPPPPPSQ) the composition is skewed to pro residues. The span at 1634-1649 (PIQTQSLSHDPVSGTQ) shows a compositional bias: polar residues. The span at 1651 to 1665 (LEKKVSPDPQKSSED) shows a compositional bias: basic and acidic residues. In terms of domain architecture, ASD2 spans 1669–1957 (EALAKEIVHQ…QVKCLLESLP (289 aa)).

This sequence belongs to the shroom family. Interacts with F-actin. Interacts with ROCK1.

The protein localises to the cell junction. It localises to the adherens junction. The protein resides in the cytoplasm. Its subcellular location is the cytoskeleton. It is found in the apical cell membrane. Its function is as follows. Controls cell shape changes in the neuroepithelium during neural tube closure. Induces apical constriction in epithelial cells by promoting the apical accumulation of F-actin and myosin II, and probably by bundling stress fibers. Induces apicobasal cell elongation by redistributing gamma-tubulin and directing the assembly of robust apicobasal microtubule arrays. In Homo sapiens (Human), this protein is Protein Shroom3 (SHROOM3).